The chain runs to 40 residues: Photosystem II reaction center protein J (40 aa).

A helical membrane pass occupies residues 8–28 (IPLWLIGTVTGIIVIGLLGVF).

The protein belongs to the PsbJ family. As to quaternary structure, PSII is composed of 1 copy each of membrane proteins PsbA, PsbB, PsbC, PsbD, PsbE, PsbF, PsbH, PsbI, PsbJ, PsbK, PsbL, PsbM, PsbT, PsbX, PsbY, PsbZ, Psb30/Ycf12, at least 3 peripheral proteins of the oxygen-evolving complex and a large number of cofactors. It forms dimeric complexes.

It localises to the plastid. The protein localises to the chloroplast thylakoid membrane. Its function is as follows. One of the components of the core complex of photosystem II (PSII). PSII is a light-driven water:plastoquinone oxidoreductase that uses light energy to abstract electrons from H(2)O, generating O(2) and a proton gradient subsequently used for ATP formation. It consists of a core antenna complex that captures photons, and an electron transfer chain that converts photonic excitation into a charge separation. The chain is Photosystem II reaction center protein J from Pinus thunbergii (Japanese black pine).